Consider the following 193-residue polypeptide: 3-isopropylmalate dehydratase small subunit (193 aa).

Belongs to the LeuD family. LeuD type 1 subfamily. As to quaternary structure, heterodimer of LeuC and LeuD.

It catalyses the reaction (2R,3S)-3-isopropylmalate = (2S)-2-isopropylmalate. It functions in the pathway amino-acid biosynthesis; L-leucine biosynthesis; L-leucine from 3-methyl-2-oxobutanoate: step 2/4. Catalyzes the isomerization between 2-isopropylmalate and 3-isopropylmalate, via the formation of 2-isopropylmaleate. The sequence is that of 3-isopropylmalate dehydratase small subunit from Bacillus anthracis (strain CDC 684 / NRRL 3495).